The primary structure comprises 461 residues: Autophagy-related protein 6 (461 aa).

Basic and acidic residues predominate over residues 75 to 88 (EEHGTDSSPDHDSS). Disordered stretches follow at residues 75-94 (EEHG…ASLV) and 101-124 (EEPV…PISG). Residues 103–113 (PVPVSAPSPES) are compositionally biased toward low complexity. A coiled-coil region spans residues 194–286 (TKLRDSIQEC…VLNRLDHLRN (93 aa)).

Belongs to the beclin family.

Required for cytoplasm to vacuole transport (Cvt) and autophagy. Also involved in endosome-to-Golgi retrograde transport. This Meyerozyma guilliermondii (strain ATCC 6260 / CBS 566 / DSM 6381 / JCM 1539 / NBRC 10279 / NRRL Y-324) (Yeast) protein is Autophagy-related protein 6 (ATG6).